The following is a 95-amino-acid chain: Small ribosomal subunit protein bS21 (95 aa).

The disordered stretch occupies residues 55 to 95 (RKLARKKMQREGLLPMKPKPVFGAGPGAGRGGPGAGARPPR). Gly residues predominate over residues 78–89 (AGPGAGRGGPGA).

The protein belongs to the bacterial ribosomal protein bS21 family.

The sequence is that of Small ribosomal subunit protein bS21 from Nitrobacter hamburgensis (strain DSM 10229 / NCIMB 13809 / X14).